The following is an 835-amino-acid chain: Ubiquitin carboxyl-terminal hydrolase 26 (835 aa).

The interval 102–128 (SQGSIRPARSDERCGEPSTSAQELNGS) is disordered. Polar residues predominate over residues 118 to 128 (PSTSAQELNGS). Residues 286–816 (QGLPNVGNTC…TGYVFFYMHN (531 aa)) enclose the USP domain. Residue C295 is the Nucleophile of the active site. The disordered stretch occupies residues 597-747 (NRESEAQSGK…TRKVDPTKLN (151 aa)). 2 stretches are compositionally biased toward basic and acidic residues: residues 634–652 (LTKE…RPSD) and 669–679 (KCNEGRSDKQI). Residues 683-708 (ALTQSRPKPISQEQTENLGKTTLSHT) are compositionally biased toward polar residues. Residues 709–725 (QDSSQSSQSSSDSSKSS) are compositionally biased toward low complexity. Residues 726 to 747 (RCSDDLDKKAKPTRKVDPTKLN) show a composition bias toward basic and acidic residues. H771 acts as the Proton acceptor in catalysis.

It belongs to the peptidase C19 family. As to quaternary structure, interacts with RING1.

Its subcellular location is the nucleus. It localises to the cytoplasm. It is found in the cytoskeleton. The protein resides in the flagellum axoneme. It carries out the reaction Thiol-dependent hydrolysis of ester, thioester, amide, peptide and isopeptide bonds formed by the C-terminal Gly of ubiquitin (a 76-residue protein attached to proteins as an intracellular targeting signal).. Functionally, deubiquitinase regulating several biological processes through the deubiquitination of components of these processes. Involved in somatic cell reprogramming through the 'Lys-48'-linked deubiquitination and stabilization of CBX4 and CBX6, two components of the polycomb-repressive complex 1 (PRC1). Also deubiquitinates and probably stabilizes the androgen receptor (AR), regulating the androgen receptor signaling pathway. May play a role in spermatogenesis. The chain is Ubiquitin carboxyl-terminal hydrolase 26 from Mus musculus (Mouse).